A 257-amino-acid chain; its full sequence is 5'-nucleotidase SurE (257 aa).

A divalent metal cation contacts are provided by Asp-8, Asp-9, Ser-40, and Asn-92.

This sequence belongs to the SurE nucleotidase family. It depends on a divalent metal cation as a cofactor.

The protein resides in the cytoplasm. It catalyses the reaction a ribonucleoside 5'-phosphate + H2O = a ribonucleoside + phosphate. Its function is as follows. Nucleotidase that shows phosphatase activity on nucleoside 5'-monophosphates. The protein is 5'-nucleotidase SurE of Rhizobium etli (strain ATCC 51251 / DSM 11541 / JCM 21823 / NBRC 15573 / CFN 42).